The primary structure comprises 141 residues: Cystatin-SA (141 aa).

Positions 1-20 (MAWPLCTLLLLLATQAVALA) are cleaved as a signal peptide. The Secondary area of contact signature appears at 76–80 (QIVGG). Cystine bridges form between Cys94–Cys104 and Cys118–Cys138.

Expressed in submandibular and sublingual saliva but not in parotid saliva (at protein level). Expressed in submandibular gland and parotid gland.

Its subcellular location is the secreted. Thiol protease inhibitor. The protein is Cystatin-SA (CST2) of Homo sapiens (Human).